The sequence spans 330 residues: Biotin synthase (330 aa).

The Radical SAM core domain maps to 43 to 272 (FMGDKFDTCS…RAFLRFSGGR (230 aa)). Positions 61, 65, and 68 each coordinate [4Fe-4S] cluster. S105, C137, C197, and R267 together coordinate [2Fe-2S] cluster.

It belongs to the radical SAM superfamily. Biotin synthase family. As to quaternary structure, homodimer. [4Fe-4S] cluster is required as a cofactor. The cofactor is [2Fe-2S] cluster.

The enzyme catalyses (4R,5S)-dethiobiotin + (sulfur carrier)-SH + 2 reduced [2Fe-2S]-[ferredoxin] + 2 S-adenosyl-L-methionine = (sulfur carrier)-H + biotin + 2 5'-deoxyadenosine + 2 L-methionine + 2 oxidized [2Fe-2S]-[ferredoxin]. It participates in cofactor biosynthesis; biotin biosynthesis; biotin from 7,8-diaminononanoate: step 2/2. Its function is as follows. Catalyzes the conversion of dethiobiotin (DTB) to biotin by the insertion of a sulfur atom into dethiobiotin via a radical-based mechanism. This is Biotin synthase from Porphyromonas gingivalis (strain ATCC 33277 / DSM 20709 / CIP 103683 / JCM 12257 / NCTC 11834 / 2561).